A 286-amino-acid polypeptide reads, in one-letter code: Mycolic acid methyltransferase MmaA1 (286 aa).

Residues 32–33, 71–73, 93–98, and 122–123 contribute to the S-adenosyl-L-methionine site; these read YT, GCG, TLSRNH, and WE. Residue C268 is part of the active site.

This sequence belongs to the CFA/CMAS family.

It functions in the pathway lipid metabolism; mycolic acid biosynthesis. Functionally, involved in the conversion of a cis-olefin into a trans-olefin with concomitant introduction of an allylic methyl branch at the proximal position of the precursor to both the methoxy and ketomycolic acids. It directly affects the cis- to trans ratio and indirectly affects the keto to methoxy ratio. In Mycobacterium bovis (strain ATCC BAA-935 / AF2122/97), this protein is Mycolic acid methyltransferase MmaA1 (cmaD).